An 84-amino-acid chain; its full sequence is Putative membrane protein insertion efficiency factor (84 aa).

Positions 63 to 84 are disordered; the sequence is LGGSGYDPPPPPKTPRKWKCEE.

It belongs to the UPF0161 family.

It localises to the cell inner membrane. Its function is as follows. Could be involved in insertion of integral membrane proteins into the membrane. The chain is Putative membrane protein insertion efficiency factor from Caulobacter sp. (strain K31).